The sequence spans 310 residues: Olfactory receptor 5AR1 (310 aa).

Over 1–25 (MDKENHSVVTEFVFMGITQDPQLQI) the chain is Extracellular. Residue Asn5 is glycosylated (N-linked (GlcNAc...) asparagine). A helical transmembrane segment spans residues 26–46 (IFFVVFLLVYLVNVIGNVGMI). Over 47-54 (ILIITDSQ) the chain is Cytoplasmic. The chain crosses the membrane as a helical span at residues 55–75 (LHTPMYFFLCNLSFVDLGYSS). Topologically, residues 76-99 (AIAPRMLADFLTKHKVISFSSCAT) are extracellular. Cys97 and Cys189 form a disulfide bridge. A helical membrane pass occupies residues 100–120 (QFAFFVGFVDAECYVLAAMAY). Over 121-133 (DRFVAICRPLHYS) the chain is Cytoplasmic. A helical transmembrane segment spans residues 134-154 (TLMSKKVCLVLMLGSYFAGLV). Topologically, residues 155–196 (SLVAHTSLTFSLSYCGSNIINHFFCEIPPLLALSCSDTYISE) are extracellular. The chain crosses the membrane as a helical span at residues 197–217 (ILLFSLCGFIEFSTILIIFIS). Cys203 serves as a coordination point for Cu cation. The Cytoplasmic segment spans residues 218–237 (YAFILIAIIRIRSAEGRLKA). Residues 238–258 (FSTCGSHLTGVTLFYGTVMFM) form a helical membrane-spanning segment. 2 residues coordinate Cu cation: Met256 and Arg261. Topologically, residues 259 to 271 (YLRPTSSYSLDQD) are extracellular. The helical transmembrane segment at 272-292 (KWASVFYTIIIPMLNPLIYSL) threads the bilayer. At 293-310 (RNKDVKAAFKKLIGKKPQ) the chain is on the cytoplasmic side.

Belongs to the G-protein coupled receptor 1 family.

Its subcellular location is the cell membrane. With respect to regulation, copper binding enhances receptor activity in response to odorant binding. Olfactory receptor that is activated by the binding of organosulfur odorants with thioether groups such as (methylthio)methanethiol (MTMT). The activity of this receptor is mediated by G proteins which activate adenylyl cyclase. In Mus musculus (Mouse), this protein is Olfactory receptor 5AR1.